Reading from the N-terminus, the 112-residue chain is Type III inner-rod protein PscI (112 aa).

It belongs to the YscI/HrpB family. Homomultimer (through its C-terminal region).

In terms of biological role, component of the type III secretion (T3S) injectisome that translocates effector toxins into host cells, facilitating the establishment and dissemination of infection. Polymerizes into flexible and regularly twisted fibrils and plays an essential role in needle assembly. The polypeptide is Type III inner-rod protein PscI (pscI) (Pseudomonas aeruginosa (strain ATCC 15692 / DSM 22644 / CIP 104116 / JCM 14847 / LMG 12228 / 1C / PRS 101 / PAO1)).